Consider the following 639-residue polypeptide: UvrABC system protein C (639 aa).

The span at 1-16 (MTDLPVDEPDRDDGAD) shows a compositional bias: acidic residues. A disordered region spans residues 1–28 (MTDLPVDEPDRDDGADQPDAGADPATPR). Residues 17–27 (QPDAGADPATP) show a composition bias toward low complexity. The region spanning 42 to 120 (SSPGVYRMID…IKKLKPRYNI (79 aa)) is the GIY-YIG domain. Residues 230-265 (KALQHDLAKRMDEAAQALDYEQAAIFRDRIKALTNV) form the UVR domain.

The protein belongs to the UvrC family. Interacts with UvrB in an incision complex.

It is found in the cytoplasm. Its function is as follows. The UvrABC repair system catalyzes the recognition and processing of DNA lesions. UvrC both incises the 5' and 3' sides of the lesion. The N-terminal half is responsible for the 3' incision and the C-terminal half is responsible for the 5' incision. The chain is UvrABC system protein C from Rhodospirillum rubrum (strain ATCC 11170 / ATH 1.1.1 / DSM 467 / LMG 4362 / NCIMB 8255 / S1).